Here is a 114-residue protein sequence, read N- to C-terminus: Immunomodulatory protein FIP-Fve (114 aa).

At serine 1 the chain carries N-acetylserine.

Belongs to the fungal immunomodulatory protein (FIP) family. As to quaternary structure, homodimer.

Its function is as follows. Lectin with specificity for complex cell-surface carbohydrates. Possesses immunomodulatory activity, stimulates lymphocyte mitogenesis, suppresses systemic anaphylaxis reactions and edema, enhances transcription of IL-2, IFN-gamma and TNF-alpha and hemagglutinates red blood cells. The polypeptide is Immunomodulatory protein FIP-Fve (Flammulina velutipes (Agaricus velutipes)).